The chain runs to 257 residues: Flavin-dependent thymidylate synthase (257 aa).

The region spanning 1-202 (MNVKLVSYTR…PRLFRYVGPN (202 aa)) is the ThyX domain. FAD contacts are provided by residues serine 55, 79-81 (RHR), and glutamine 87. Residues 76–79 (QLVR), 87–91 (QMSHR), and arginine 141 contribute to the dUMP site. The ThyX motif motif lies at 79–89 (RHRVASYTQMS). FAD-binding positions include 157–159 (NAR) and asparagine 163. Arginine 168 contributes to the dUMP binding site. The active-site Involved in ionization of N3 of dUMP, leading to its activation is the arginine 168.

It belongs to the thymidylate synthase ThyX family. Homotetramer. It depends on FAD as a cofactor.

It carries out the reaction dUMP + (6R)-5,10-methylene-5,6,7,8-tetrahydrofolate + NADPH + H(+) = dTMP + (6S)-5,6,7,8-tetrahydrofolate + NADP(+). The protein operates within pyrimidine metabolism; dTTP biosynthesis. In terms of biological role, catalyzes the reductive methylation of 2'-deoxyuridine-5'-monophosphate (dUMP) to 2'-deoxythymidine-5'-monophosphate (dTMP) while utilizing 5,10-methylenetetrahydrofolate (mTHF) as the methyl donor, and NADPH and FADH(2) as the reductant. The sequence is that of Flavin-dependent thymidylate synthase from Sulfurisphaera tokodaii (strain DSM 16993 / JCM 10545 / NBRC 100140 / 7) (Sulfolobus tokodaii).